We begin with the raw amino-acid sequence, 411 residues long: Dual-specificity RNA methyltransferase RlmN (411 aa).

E125 (proton acceptor) is an active-site residue. The 250-residue stretch at 131–380 (EEGRGTLCIS…IRTPRGRDIL (250 aa)) folds into the Radical SAM core domain. C138 and C383 form a disulfide bridge. [4Fe-4S] cluster is bound by residues C145, C149, and C152. S-adenosyl-L-methionine is bound by residues 209 to 210 (GE), S241, 263 to 265 (SLH), and N340. C383 acts as the S-methylcysteine intermediate in catalysis.

It belongs to the radical SAM superfamily. RlmN family. [4Fe-4S] cluster serves as cofactor.

It is found in the cytoplasm. The enzyme catalyses adenosine(2503) in 23S rRNA + 2 reduced [2Fe-2S]-[ferredoxin] + 2 S-adenosyl-L-methionine = 2-methyladenosine(2503) in 23S rRNA + 5'-deoxyadenosine + L-methionine + 2 oxidized [2Fe-2S]-[ferredoxin] + S-adenosyl-L-homocysteine. It carries out the reaction adenosine(37) in tRNA + 2 reduced [2Fe-2S]-[ferredoxin] + 2 S-adenosyl-L-methionine = 2-methyladenosine(37) in tRNA + 5'-deoxyadenosine + L-methionine + 2 oxidized [2Fe-2S]-[ferredoxin] + S-adenosyl-L-homocysteine. Functionally, specifically methylates position 2 of adenine 2503 in 23S rRNA and position 2 of adenine 37 in tRNAs. m2A2503 modification seems to play a crucial role in the proofreading step occurring at the peptidyl transferase center and thus would serve to optimize ribosomal fidelity. In Brucella abortus (strain S19), this protein is Dual-specificity RNA methyltransferase RlmN.